Reading from the N-terminus, the 612-residue chain is DITFAGVQRALPNAPDGYVPTSVSCPASRPTVRSAAKLSTNETSWLEVRRGKTLSALKDFFGHVKVGDYDVGAYLDKHSGNSSSLPNIGIAVSGGGWRALMNGAGAVKAFDSRTDNATATGHLGGLLQSATYISGLSGGSWLLGSIYINNFTTVDKLQTHEAGSVWQFGNSIIEGPDAGGIQLLDSAGYYKDLADAVDGKKKAGFDTTLTDIWGRALSYQMFNASNGGLSYTWSSIADTPEFQDGDYPMPFVVADGRNPGELVIGSNSTVYEFNPWEFGTFDPTIFGFVPLEYLGSKFEGGSLPSNESCIRGFDSAGFVIGTSSSLFNQFLLQINTTSLPSFIKDVFNGILFDLDKSQNDIASYDPNPFYKYNEHSSPYAAQKLLDVVDGGEDGQNVPLHPLIQPERHVDVIFAVDSSADTDYFWPNGTSLVATYERSLNSSGIANGTAFPAVPDQNTFINLGLSTRPSFFGCDSSNQTGPSPLVVYIPNAPYSYHSNISTFQLSTDDAERDNIILNGYEVATMANSTLDDNWTACVACAILSRSFERTGTTLPDICSQCFDRYCWNGTVNSTRPESYDPAFYLADNSMASVSLPTMLSTVVAAGLAMLILV.

The signal sequence occupies residues 1-9; that stretch reads DITFAGVQR. A PLA2c domain is found at 24 to 571; the sequence is SCPASRPTVR…DRYCWNGTVN (548 aa). 17 N-linked (GlcNAc...) asparagine glycosylation sites follow: Asn-41, Asn-81, Asn-116, Asn-150, Asn-223, Asn-267, Asn-306, Asn-335, Asn-427, Asn-440, Asn-446, Asn-477, Asn-498, Asn-526, Asn-532, Asn-567, and Asn-571.

This sequence belongs to the lysophospholipase family. N-glycosylated.

Its subcellular location is the secreted. The catalysed reaction is a 1-acyl-sn-glycero-3-phosphocholine + H2O = sn-glycerol 3-phosphocholine + a fatty acid + H(+). Functionally, catalyzes the release of fatty acids from lysophospholipids. This chain is Lysophospholipase, found in Penicillium chrysogenum (Penicillium notatum).